The following is a 160-amino-acid chain: Biogenesis of lysosome-related organelles complex 1 subunit 5 (160 aa).

Belongs to the BLOC1S5 family. Component of the biogenesis of lysosome-related organelles complex-1 (BLOC-1) composed of Blos1, Blos2, Blos3, Blos4, Dysb, Muted, Pldn and Snapin.

In terms of biological role, component of the biogenesis of lysosome-related organelles complex-1 (BLOC-1) involved in pigment granule biogenesis. In Drosophila melanogaster (Fruit fly), this protein is Biogenesis of lysosome-related organelles complex 1 subunit 5.